Here is an 808-residue protein sequence, read N- to C-terminus: Sucrose synthase (808 aa).

Positions 271–753 (MLFRIALISP…GIERVYSTYT (483 aa)) are GT-B glycosyltransferase.

Belongs to the glycosyltransferase 1 family. As to quaternary structure, probably a homotetramer.

It carries out the reaction an NDP-alpha-D-glucose + D-fructose = a ribonucleoside 5'-diphosphate + sucrose + H(+). The enzyme catalyses ADP-alpha-D-glucose + D-fructose = sucrose + ADP + H(+). In terms of biological role, catalyzes the reversible conversion of sucrose and a nucleotide disphosphate (NDP) into fructose and NDP-glucose; although the reaction is freely reversible in vitro, the physiological reaction seems to be sucrose cleavage. Unlike characterized plant enzymes prefers ADP as a cosubstrate, whereas plants prefer UDP. Its preference for ADP over UDP suggests it may directly link sucrose and glycogen metabolism. The protein is Sucrose synthase of Thermosynechococcus vestitus (strain NIES-2133 / IAM M-273 / BP-1).